We begin with the raw amino-acid sequence, 141 residues long: Putative pre-16S rRNA nuclease (141 aa).

This sequence belongs to the YqgF nuclease family.

It is found in the cytoplasm. Functionally, could be a nuclease involved in processing of the 5'-end of pre-16S rRNA. The protein is Putative pre-16S rRNA nuclease of Shewanella oneidensis (strain ATCC 700550 / JCM 31522 / CIP 106686 / LMG 19005 / NCIMB 14063 / MR-1).